The primary structure comprises 873 residues: Alanine--tRNA ligase (873 aa).

Zn(2+) is bound by residues H562, H566, C664, and H668.

This sequence belongs to the class-II aminoacyl-tRNA synthetase family. Zn(2+) is required as a cofactor.

The protein resides in the cytoplasm. It carries out the reaction tRNA(Ala) + L-alanine + ATP = L-alanyl-tRNA(Ala) + AMP + diphosphate. In terms of biological role, catalyzes the attachment of alanine to tRNA(Ala) in a two-step reaction: alanine is first activated by ATP to form Ala-AMP and then transferred to the acceptor end of tRNA(Ala). Also edits incorrectly charged Ser-tRNA(Ala) and Gly-tRNA(Ala) via its editing domain. This is Alanine--tRNA ligase from Shewanella amazonensis (strain ATCC BAA-1098 / SB2B).